The sequence spans 282 residues: MIENRPIARVIAHLMLVLGIIIVAFPIYYTFIASSMTSNDIIRPPMSLLPGDHLSANYTEAMVGGVERVVGVSLERLLFNSFVVALAIAIGKIVISFLSAFAIVFFRFPFRMGFFWMIFITLMLPVEVRILPTYKVIVDLGLIDTYAGLTLPLMASATATFLFRQFFLTIPGELVEAARIDNAGPFRFMRDILLPLSRTNIAALFVILFIYGWTQYLWPLLVTNDAKMNTIIIGLKRMVDFTDASTPWNYVMVTAILAIIPPVMVVVLMQRWFVKGLVETEK.

A run of 6 helical transmembrane segments spans residues 14 to 34, 86 to 106, 112 to 132, 146 to 168, 201 to 221, and 248 to 268; these read LMLV…FIAS, LAIA…IVFF, MGFF…RILP, YAGL…QFFL, IAAL…WPLL, and WNYV…VVVL. The ABC transmembrane type-1 domain occupies 78 to 269; it reads LFNSFVVALA…IPPVMVVVLM (192 aa).

The protein belongs to the binding-protein-dependent transport system permease family. As to quaternary structure, the complex is composed of two ATP-binding proteins (UgpC), two transmembrane proteins (UgpA and UgpE) and a solute-binding protein (UgpB).

It is found in the cell inner membrane. In terms of biological role, part of the ABC transporter complex UgpBAEC involved in sn-glycerol-3-phosphate (G3P) import. Probably responsible for the translocation of the substrate across the membrane. In Agrobacterium fabrum (strain C58 / ATCC 33970) (Agrobacterium tumefaciens (strain C58)), this protein is sn-glycerol-3-phosphate transport system permease protein UgpE (ugpE).